Reading from the N-terminus, the 1048-residue chain is Malignant fibrous histiocytoma-amplified sequence 1 homolog (1048 aa).

The residue at position 2 (A2) is an N-acetylalanine. 13 LRR repeats span residues 60 to 81 (DIEVLNLGNNGLEDVPEGLGSA), 84 to 105 (SLRVLVLRRNRFARLPPAVAEL), 108 to 129 (HLTELDVSHNRLTILGAEVVSA), 132 to 153 (ELRKLNLSHNQLPALPAQLGAL), 155 to 176 (HLEELDVSFNRLAHLPDSFSCL), 178 to 199 (HLRTLDVDHNQLTAFPQQLLQL), 201 to 222 (ALEELDVSSNRLRGLPEDISAL), 224 to 246 (ALKILWLSGAELGTLPRGFCELA), 247 to 268 (SLESLMLDNNGLQALPDEFSRL), 270 to 292 (RLKMLNLSSNLFEEFPAALLPLA), 293 to 314 (GLEELYLSRNQLTSVPSLIAGL), 316 to 337 (RLLTLWLDNNRIRYLPDSIVEL), and 339 to 360 (GLEELVLQGNQIAVLPDNFGQL). Residues 60–360 (DIEVLNLGNN…AVLPDNFGQL (301 aa)) are required for interaction with PJA2. Positions 60-645 (DIEVLNLGNN…DKLLSVAEHR (586 aa)) are required for interaction with PPP2R2A. In terms of domain architecture, Roc spans 399 to 645 (QPAVQPRLKL…DKLLSVAEHR (247 aa)). K597 is modified (N6-acetyllysine).

In terms of assembly, interacts with RAF1. Interacts with HSPD1. Interacts with PPP2CA; retains PPP2CA into the cytoplasm and excludes it from the nucleus. Interacts with PPP2R2A; the interaction is direct. Interacts with PJA2. Post-translationally, ubiquitinated. Ubiquitination by PJA2 does not lead MFHAS1 to proteasomal degradation but positively regulates its function in polarization of macrophages.

The protein resides in the cytoplasm. In terms of biological role, probable GTP-binding protein. Functions in innate immunity and more specifically the inflammatory response as a regulator of the Toll-like receptor TLR2 and TLR4 signaling pathways. Negatively regulates the part of the TLR4 signaling pathway that leads to the activation of the transcription factor AP-1. By retaining the phosphatase complex PP2A into the cytoplasm, prevents the dephosphorylation of the AP-1 subunit JUN which is required for proper activation of the transcription factor. Both inhibits and activates the TLR2-dependent signaling pathway. Positively regulates the TLR2 signaling pathway to activate specifically the downstream p38 and JNK MAP kinases and promote the polarization of macrophages toward the pro-inflammatory M1 phenotype. It may also play a role in the regulation of inflammation induced by high glucose through the PKB/AKT signaling pathway. Also involved in erythrocyte differentiation through activation of the ERK1/ERK2 signaling pathway. The chain is Malignant fibrous histiocytoma-amplified sequence 1 homolog from Mus musculus (Mouse).